Consider the following 502-residue polypeptide: Glycerol kinase (502 aa).

T14 serves as a coordination point for ADP. 3 residues coordinate ATP: T14, T15, and S16. Residue T14 coordinates sn-glycerol 3-phosphate. R18 is an ADP binding site. The sn-glycerol 3-phosphate site is built by R84, E85, Y136, and D246. Glycerol-binding residues include R84, E85, Y136, D246, and Q247. Positions 268 and 311 each coordinate ADP. Residues T268, G311, Q315, and G412 each contribute to the ATP site. ADP-binding residues include G412 and N416.

Belongs to the FGGY kinase family. As to quaternary structure, homotetramer and homodimer (in equilibrium). Heterodimer with EIIA-Glc. Binds 1 zinc ion per glycerol kinase EIIA-Glc dimer. The zinc ion is important for dimerization.

The catalysed reaction is glycerol + ATP = sn-glycerol 3-phosphate + ADP + H(+). It functions in the pathway polyol metabolism; glycerol degradation via glycerol kinase pathway; sn-glycerol 3-phosphate from glycerol: step 1/1. Activity of this regulatory enzyme is affected by several metabolites. Allosterically and non-competitively inhibited by fructose 1,6-bisphosphate (FBP) and unphosphorylated phosphocarrier protein EIIA-Glc (III-Glc), an integral component of the bacterial phosphotransferase (PTS) system. In terms of biological role, key enzyme in the regulation of glycerol uptake and metabolism. Catalyzes the phosphorylation of glycerol to yield sn-glycerol 3-phosphate. This is Glycerol kinase from Escherichia fergusonii (strain ATCC 35469 / DSM 13698 / CCUG 18766 / IAM 14443 / JCM 21226 / LMG 7866 / NBRC 102419 / NCTC 12128 / CDC 0568-73).